Consider the following 122-residue polypeptide: Large ribosomal subunit protein uL14c (122 aa).

This sequence belongs to the universal ribosomal protein uL14 family. As to quaternary structure, part of the 50S ribosomal subunit.

It localises to the plastid. Its subcellular location is the chloroplast. Its function is as follows. Binds to 23S rRNA. The protein is Large ribosomal subunit protein uL14c of Acorus calamus (Sweet flag).